A 457-amino-acid polypeptide reads, in one-letter code: tRNA-2-methylthio-N(6)-dimethylallyladenosine synthase (457 aa).

An MTTase N-terminal domain is found at 3-120 (KKVYVKTFGC…LPQMIDARRE (118 aa)). Cys-12, Cys-49, Cys-83, Cys-157, Cys-161, and Cys-164 together coordinate [4Fe-4S] cluster. The Radical SAM core domain occupies 143 to 377 (RVEGPSAFVS…QATIEENVAR (235 aa)). A TRAM domain is found at 380-447 (QSMLGKVERI…PHSLRGELVL (68 aa)).

This sequence belongs to the methylthiotransferase family. MiaB subfamily. In terms of assembly, monomer. The cofactor is [4Fe-4S] cluster.

Its subcellular location is the cytoplasm. The catalysed reaction is N(6)-dimethylallyladenosine(37) in tRNA + (sulfur carrier)-SH + AH2 + 2 S-adenosyl-L-methionine = 2-methylsulfanyl-N(6)-dimethylallyladenosine(37) in tRNA + (sulfur carrier)-H + 5'-deoxyadenosine + L-methionine + A + S-adenosyl-L-homocysteine + 2 H(+). In terms of biological role, catalyzes the methylthiolation of N6-(dimethylallyl)adenosine (i(6)A), leading to the formation of 2-methylthio-N6-(dimethylallyl)adenosine (ms(2)i(6)A) at position 37 in tRNAs that read codons beginning with uridine. In Burkholderia mallei (strain NCTC 10247), this protein is tRNA-2-methylthio-N(6)-dimethylallyladenosine synthase.